The sequence spans 1438 residues: DNA polymerase III PolC-type (1438 aa).

Residues Tyr422 to Phe578 enclose the Exonuclease domain.

It belongs to the DNA polymerase type-C family. PolC subfamily.

The protein localises to the cytoplasm. It catalyses the reaction DNA(n) + a 2'-deoxyribonucleoside 5'-triphosphate = DNA(n+1) + diphosphate. Functionally, required for replicative DNA synthesis. This DNA polymerase also exhibits 3' to 5' exonuclease activity. This chain is DNA polymerase III PolC-type, found in Staphylococcus aureus (strain MRSA252).